Consider the following 481-residue polypeptide: Probable glycine dehydrogenase (decarboxylating) subunit 2 (481 aa).

The tract at residues 1-26 (MVIFEKTRGKNSPSVMPSKKGDVSNI) is disordered. The residue at position 263 (Lys-263) is an N6-(pyridoxal phosphate)lysine.

This sequence belongs to the GcvP family. C-terminal subunit subfamily. As to quaternary structure, the glycine cleavage system is composed of four proteins: P, T, L and H. In this organism, the P 'protein' is a heterodimer of two subunits. Pyridoxal 5'-phosphate is required as a cofactor.

The enzyme catalyses N(6)-[(R)-lipoyl]-L-lysyl-[glycine-cleavage complex H protein] + glycine + H(+) = N(6)-[(R)-S(8)-aminomethyldihydrolipoyl]-L-lysyl-[glycine-cleavage complex H protein] + CO2. The glycine cleavage system catalyzes the degradation of glycine. The P protein binds the alpha-amino group of glycine through its pyridoxal phosphate cofactor; CO(2) is released and the remaining methylamine moiety is then transferred to the lipoamide cofactor of the H protein. This chain is Probable glycine dehydrogenase (decarboxylating) subunit 2, found in Francisella tularensis subsp. mediasiatica (strain FSC147).